The following is a 584-amino-acid chain: MAAKLELLIAQTILQGFDAQYGRFLEVTAGAQQRFERADWPAVQQAMKKRIHLYDHHVGLVVEQLKCITGQQYFDADFPSRVKAVYTDLLPEYPRFEIAESFFNSVYCRLFRHRDLTPEKLFVFSSQPEGRFRDIPRPLSRDFTANGDVSAMLYNLLTDLPLRLPWENLSRDIDYITLALQQSFSAQQLAGATFQIANELFYRNKAAWLVGKLRVADRVYPFLLPIHHSDSGALFIDTCLTSKAEASIVFGFARSYFMVYAPLPAAMVEWLREILPGKTTAELYMAIGCQKHGKTECYREYLTFMSGSQEQFIIAPGVKGMVMLVFTLPSFDRVFKVIKDEFAPQKEVTQAQVMACYQLVKEHDRVGRMADTQEYENFVVDKARLSPELLAELQREVPDKLEDLGDRIAIRHLYMERRMTPLNLYLEQADEQQMRDAIEEYGNAIKQLAAANIFPGDMLFKNFGVTRHGRVVFYDYDEICYMTEVNFRDIPPPRYPEDELASEPWYSVSPNDVFPEEFRHFLCGDRRIRQVFEEMHRDLFEADYWRGLQQRIRDGHVEDVFAYRKKRRFSQRSGAALPATSATA.

ATP contacts are provided by residues 315 to 321 (APGVKGM) and K336. The active site involves D371.

Belongs to the AceK family.

Its subcellular location is the cytoplasm. The catalysed reaction is L-seryl-[isocitrate dehydrogenase] + ATP = O-phospho-L-seryl-[isocitrate dehydrogenase] + ADP + H(+). Bifunctional enzyme which can phosphorylate or dephosphorylate isocitrate dehydrogenase (IDH) on a specific serine residue. This is a regulatory mechanism which enables bacteria to bypass the Krebs cycle via the glyoxylate shunt in response to the source of carbon. When bacteria are grown on glucose, IDH is fully active and unphosphorylated, but when grown on acetate or ethanol, the activity of IDH declines drastically concomitant with its phosphorylation. This chain is Isocitrate dehydrogenase kinase/phosphatase, found in Serratia proteamaculans (strain 568).